Reading from the N-terminus, the 69-residue chain is DNA gyrase inhibitor YacG (69 aa).

Zn(2+) is bound by residues cysteine 12, cysteine 15, cysteine 31, and cysteine 35. Positions 49–69 (RVPVEPKPDEGETPDQAERPQ) are disordered.

It belongs to the DNA gyrase inhibitor YacG family. As to quaternary structure, interacts with GyrB. Zn(2+) serves as cofactor.

Its function is as follows. Inhibits all the catalytic activities of DNA gyrase by preventing its interaction with DNA. Acts by binding directly to the C-terminal domain of GyrB, which probably disrupts DNA binding by the gyrase. In Thiobacillus denitrificans (strain ATCC 25259 / T1), this protein is DNA gyrase inhibitor YacG.